The sequence spans 329 residues: Flotillin-like protein FloA (329 aa).

2 helical membrane-spanning segments follow: residues 5–25 (IFLLVVIGLIFVFLSVILSFI) and 27–47 (LGLWISALAAGVKIGIFTLVG).

The protein belongs to the flotillin-like FloA family. Homooligomerizes.

It localises to the cell membrane. The protein localises to the membrane raft. Functionally, found in functional membrane microdomains (FMM) that may be equivalent to eukaryotic membrane rafts. FMMs are highly dynamic and increase in number as cells age. Flotillins are thought to be important factors in membrane fluidity. This is Flotillin-like protein FloA from Thermoanaerobacter sp. (strain X514).